A 914-amino-acid chain; its full sequence is Isoleucine--tRNA ligase (914 aa).

Positions 64-74 (PYANGNFHLGH) match the 'HIGH' region motif. Glu557 is an L-isoleucyl-5'-AMP binding site. Positions 598–602 (PMSKS) match the 'KMSKS' region motif. ATP is bound at residue Lys601. Zn(2+) contacts are provided by Cys889, Cys892, Cys906, and Cys909.

It belongs to the class-I aminoacyl-tRNA synthetase family. IleS type 1 subfamily. As to quaternary structure, monomer. Requires Zn(2+) as cofactor.

Its subcellular location is the cytoplasm. It carries out the reaction tRNA(Ile) + L-isoleucine + ATP = L-isoleucyl-tRNA(Ile) + AMP + diphosphate. Catalyzes the attachment of isoleucine to tRNA(Ile). As IleRS can inadvertently accommodate and process structurally similar amino acids such as valine, to avoid such errors it has two additional distinct tRNA(Ile)-dependent editing activities. One activity is designated as 'pretransfer' editing and involves the hydrolysis of activated Val-AMP. The other activity is designated 'posttransfer' editing and involves deacylation of mischarged Val-tRNA(Ile). This is Isoleucine--tRNA ligase from Leptospira interrogans serogroup Icterohaemorrhagiae serovar Lai (strain 56601).